The chain runs to 447 residues: Argininosuccinate synthase (447 aa).

ATP-binding positions include Ala-17–Ser-25 and Ala-43. Residue Tyr-99 participates in L-citrulline binding. The ATP site is built by Gly-129 and Thr-131. Residues Thr-131, Asn-135, and Asp-136 each coordinate L-aspartate. Asn-135 lines the L-citrulline pocket. Asp-136 provides a ligand contact to ATP. L-citrulline-binding residues include Arg-139 and Ser-192. Asp-194 contacts ATP. L-citrulline-binding residues include Thr-201, Glu-203, and Glu-280.

It belongs to the argininosuccinate synthase family. Type 2 subfamily. As to quaternary structure, homotetramer.

Its subcellular location is the cytoplasm. The catalysed reaction is L-citrulline + L-aspartate + ATP = 2-(N(omega)-L-arginino)succinate + AMP + diphosphate + H(+). It participates in amino-acid biosynthesis; L-arginine biosynthesis; L-arginine from L-ornithine and carbamoyl phosphate: step 2/3. The chain is Argininosuccinate synthase from Escherichia coli O127:H6 (strain E2348/69 / EPEC).